Reading from the N-terminus, the 89-residue chain is Small ribosomal subunit protein uS19 (89 aa).

Belongs to the universal ribosomal protein uS19 family.

Protein S19 forms a complex with S13 that binds strongly to the 16S ribosomal RNA. In Azobacteroides pseudotrichonymphae genomovar. CFP2, this protein is Small ribosomal subunit protein uS19.